The following is a 360-amino-acid chain: Cysteine proteinase 2 (360 aa).

An N-terminal signal peptide occupies residues 1-19; sequence MVPRRLFVLAVVVLADTAA. The propeptide at 20–142 is activation peptide; the sequence is VVNSGFADSN…NHRMRAAAVA (123 aa). N-linked (GlcNAc...) asparagine glycosylation is present at N125. Disulfide bonds link C164-C207 and C198-C240. C167 is a catalytic residue. Residue N256 is glycosylated (N-linked (GlcNAc...) asparagine). C298 and C348 are joined by a disulfide. Active-site residues include H307 and N327.

Belongs to the peptidase C1 family. Expressed at the onset of germination.

Its subcellular location is the vacuole. Functionally, involved in the degradation of the storage protein zein. May play a role in proteolysis during emergencies. This Zea mays (Maize) protein is Cysteine proteinase 2 (CCP2).